The following is a 255-amino-acid chain: Ribosomal RNA small subunit methyltransferase G (255 aa).

Residues 1 to 44 (MSSPGRPKGEYRSAQHAGAVAGPPGRPDGEHRGSSGADPNGRLR) are disordered. S-adenosyl-L-methionine is bound by residues glycine 118, leucine 123, 169–170 (VE), and arginine 183.

The protein belongs to the methyltransferase superfamily. RNA methyltransferase RsmG family.

It is found in the cytoplasm. The enzyme catalyses guanosine(527) in 16S rRNA + S-adenosyl-L-methionine = N(7)-methylguanosine(527) in 16S rRNA + S-adenosyl-L-homocysteine. Functionally, specifically methylates the N7 position of guanine in position 527 of 16S rRNA. This Bordetella petrii (strain ATCC BAA-461 / DSM 12804 / CCUG 43448) protein is Ribosomal RNA small subunit methyltransferase G.